Consider the following 79-residue polypeptide: Ketoisovalerate oxidoreductase subunit VorC (79 aa).

4Fe-4S ferredoxin-type domains lie at 4 to 33 (AYPV…MSNK) and 40 to 70 (HYVE…VHIE). C13, C16, C19, C23, C49, C52, C55, and C59 together coordinate [4Fe-4S] cluster.

Heterotrimer of the VorA, VorB and VorC subunits. It depends on [4Fe-4S] cluster as a cofactor.

The enzyme catalyses 3-methyl-2-oxobutanoate + 2 oxidized [2Fe-2S]-[ferredoxin] + CoA = 2-methylpropanoyl-CoA + 2 reduced [2Fe-2S]-[ferredoxin] + CO2 + H(+). The polypeptide is Ketoisovalerate oxidoreductase subunit VorC (vorC) (Methanothermobacter marburgensis (strain ATCC BAA-927 / DSM 2133 / JCM 14651 / NBRC 100331 / OCM 82 / Marburg) (Methanobacterium thermoautotrophicum)).